A 270-amino-acid polypeptide reads, in one-letter code: 4-hydroxy-tetrahydrodipicolinate reductase (270 aa).

NAD(+)-binding positions include 8-13, aspartate 34, 102-104, and 128-131; these read GALGRM, GTT, and SQNY. The Proton donor/acceptor role is filled by histidine 160. Histidine 161 contributes to the (S)-2,3,4,5-tetrahydrodipicolinate binding site. Lysine 164 (proton donor) is an active-site residue. 170–171 contacts (S)-2,3,4,5-tetrahydrodipicolinate; that stretch reads GT.

The protein belongs to the DapB family.

It localises to the cytoplasm. It carries out the reaction (S)-2,3,4,5-tetrahydrodipicolinate + NAD(+) + H2O = (2S,4S)-4-hydroxy-2,3,4,5-tetrahydrodipicolinate + NADH + H(+). The enzyme catalyses (S)-2,3,4,5-tetrahydrodipicolinate + NADP(+) + H2O = (2S,4S)-4-hydroxy-2,3,4,5-tetrahydrodipicolinate + NADPH + H(+). It functions in the pathway amino-acid biosynthesis; L-lysine biosynthesis via DAP pathway; (S)-tetrahydrodipicolinate from L-aspartate: step 4/4. In terms of biological role, catalyzes the conversion of 4-hydroxy-tetrahydrodipicolinate (HTPA) to tetrahydrodipicolinate. The chain is 4-hydroxy-tetrahydrodipicolinate reductase from Methanococcus maripaludis (strain C5 / ATCC BAA-1333).